Reading from the N-terminus, the 75-residue chain is Small ribosomal subunit protein bS18 (75 aa).

It belongs to the bacterial ribosomal protein bS18 family. Part of the 30S ribosomal subunit. Forms a tight heterodimer with protein bS6.

In terms of biological role, binds as a heterodimer with protein bS6 to the central domain of the 16S rRNA, where it helps stabilize the platform of the 30S subunit. The polypeptide is Small ribosomal subunit protein bS18 (Shewanella loihica (strain ATCC BAA-1088 / PV-4)).